The sequence spans 341 residues: Ferrochelatase (341 aa).

Positions 189 and 293 each coordinate Fe cation.

Belongs to the ferrochelatase family.

The protein localises to the cytoplasm. It catalyses the reaction heme b + 2 H(+) = protoporphyrin IX + Fe(2+). The protein operates within porphyrin-containing compound metabolism; protoheme biosynthesis; protoheme from protoporphyrin-IX: step 1/1. Catalyzes the ferrous insertion into protoporphyrin IX. The polypeptide is Ferrochelatase (Pseudomonas fluorescens (strain SBW25)).